Consider the following 380-residue polypeptide: Lipid-A-disaccharide synthase (380 aa).

Belongs to the LpxB family.

The catalysed reaction is a lipid X + a UDP-2-N,3-O-bis[(3R)-3-hydroxyacyl]-alpha-D-glucosamine = a lipid A disaccharide + UDP + H(+). It participates in bacterial outer membrane biogenesis; LPS lipid A biosynthesis. Its function is as follows. Condensation of UDP-2,3-diacylglucosamine and 2,3-diacylglucosamine-1-phosphate to form lipid A disaccharide, a precursor of lipid A, a phosphorylated glycolipid that anchors the lipopolysaccharide to the outer membrane of the cell. The protein is Lipid-A-disaccharide synthase of Azotobacter vinelandii (strain DJ / ATCC BAA-1303).